A 283-amino-acid polypeptide reads, in one-letter code: Protease HtpX (283 aa).

2 consecutive transmembrane segments (helical) span residues 4 to 24 (ILLF…ILSV) and 33 to 53 (GGIL…SLFL). Zn(2+) is bound at residue H139. Residue E140 is part of the active site. H143 lines the Zn(2+) pocket. 2 helical membrane-spanning segments follow: residues 147–167 (GDMV…IFLS) and 190–210 (IYFL…SIIA). Zn(2+) is bound at residue E218.

Belongs to the peptidase M48B family. Zn(2+) is required as a cofactor.

The protein resides in the cell inner membrane. The polypeptide is Protease HtpX (Haemophilus influenzae (strain PittEE)).